Here is a 1292-residue protein sequence, read N- to C-terminus: (E3-independent) E2 ubiquitin-conjugating enzyme (1292 aa).

Residues Met-1–Ala-37 are compositionally biased toward pro residues. 2 disordered regions span residues Met-1–Ser-56 and Glu-85–Ala-114. A compositionally biased stretch (low complexity) spans Pro-38–Ser-56. A phosphoserine mark is found at Ser-50, Ser-87, Ser-89, Ser-399, and Ser-401. 3 disordered regions span residues Ser-401 to Gln-459, Arg-472 to Ser-519, and Ile-714 to Gly-746. Over residues Cys-406–Ala-427 the composition is skewed to basic and acidic residues. Phosphoserine is present on Ser-441. Acidic residues predominate over residues Gln-478–Asp-490. 2 positions are modified to phosphothreonine: Thr-488 and Thr-491. Low complexity predominate over residues Thr-491–Thr-510. The Nuclear localization signal motif lies at Arg-512–Arg-536. Phosphoserine is present on Ser-515. The segment covering Asp-732–Glu-742 has biased composition (acidic residues). Residues Arg-812–Val-882 are a coiled coil. The residue at position 836 (Ser-836) is a Phosphoserine. Residue Thr-838 is modified to Phosphothreonine. The residue at position 839 (Ser-839) is a Phosphoserine. Over residues Val-882 to Glu-893 the composition is skewed to basic and acidic residues. The interval Val-882–Pro-903 is disordered. The residue at position 896 (Ser-896) is a Phosphoserine. The 161-residue stretch at Lys-953 to Thr-1113 folds into the UBC core domain. Cys-1040 functions as the Glycyl thioester intermediate in the catalytic mechanism. A disordered region spans residues Asn-1160 to Lys-1248.

It belongs to the ubiquitin-conjugating enzyme family. As to quaternary structure, interacts with CPNE1 (via VWFA domain) and CPNE4 (via VWFA domain). Interacts with UBR2. Phosphorylated. Phosphorylation affects subcellular location. In terms of processing, ubiquitinated: autoubiquitinates, possibly affecting its subcellular location. In terms of tissue distribution, predominantly expressed in skeletal muscle and heart.

Its subcellular location is the cytoplasm. It is found in the nucleus. It carries out the reaction S-ubiquitinyl-[E1 ubiquitin-activating enzyme]-L-cysteine + [acceptor protein]-L-lysine = [E1 ubiquitin-activating enzyme]-L-cysteine + N(6)-monoubiquitinyl-[acceptor protein]-L-lysine.. It participates in protein modification; protein ubiquitination. With respect to regulation, inhibited by phenylarsine oxide (PAO). In terms of biological role, E2/E3 hybrid ubiquitin-protein ligase that displays both E2 and E3 ligase activities and mediates monoubiquitination of target proteins. Negatively regulates TRAF6-mediated NF-kappa-B activation independently of its E2 activity. Acts as a positive regulator of BMP7 signaling by mediating monoubiquitination of SMAD6, thereby regulating adipogenesis. Mediates monoubiquitination at different sites of the nuclear localization signal (NLS) of BAP1, leading to cytoplasmic retention of BAP1. Also able to monoubiquitinate the NLS of other chromatin-associated proteins, such as INO80 and CXXC1, affecting their subcellular location. Acts as a regulator of retrograde transport by assisting the TRIM27:MAGEL2 E3 ubiquitin ligase complex to mediate 'Lys-63'-linked ubiquitination of WASHC1, leading to promote endosomal F-actin assembly. The polypeptide is (E3-independent) E2 ubiquitin-conjugating enzyme (UBE2O) (Homo sapiens (Human)).